Reading from the N-terminus, the 122-residue chain is Large ribosomal subunit protein uL14 (122 aa).

This sequence belongs to the universal ribosomal protein uL14 family. Part of the 50S ribosomal subunit. Forms a cluster with proteins L3 and L19. In the 70S ribosome, L14 and L19 interact and together make contacts with the 16S rRNA in bridges B5 and B8.

Binds to 23S rRNA. Forms part of two intersubunit bridges in the 70S ribosome. This is Large ribosomal subunit protein uL14 from Buchnera aphidicola subsp. Acyrthosiphon pisum (strain 5A).